The sequence spans 238 residues: Probable transcriptional regulatory protein STER_0242 (238 aa).

Belongs to the TACO1 family. YeeN subfamily.

Its subcellular location is the cytoplasm. The protein is Probable transcriptional regulatory protein STER_0242 of Streptococcus thermophilus (strain ATCC BAA-491 / LMD-9).